Reading from the N-terminus, the 225-residue chain is MMYHIPGVLSPQDVARFREQLEQAEWVDGRVTTGAQGAQVKNNQQVDTRSTLYAALQNEVLNAVNQHALFFAAALPRTLSTPLFNRYQNNETYGFHVDGAVRSHPQNGWMRTDLSATLFLSDPQSYDGGELVVNDTFGQHRVKLPAGDLVLYPSSSLHCVTPVTRGVRVASFMWIQSMIRDDKKRAMLFELDNNIQSLKSRYGESEEILSLLNLYHNLLREWSEI.

The Fe2OG dioxygenase domain maps to 78–177 (TLSTPLFNRY…RVASFMWIQS (100 aa)). Fe cation-binding residues include histidine 96, aspartate 98, and histidine 158. Arginine 168 serves as a coordination point for 2-oxoglutarate.

Fe(2+) serves as cofactor. It depends on L-ascorbate as a cofactor.

The protein is PKHD-type hydroxylase YbiX of Escherichia coli (strain K12 / DH10B).